Consider the following 198-residue polypeptide: Alpha1-proteinase inhibitor-degradation deficient protein 37 (198 aa).

Ser-79 bears the Phosphoserine mark.

It localises to the cytoplasm. Involved in ER-associated protein degradation (ERAD). This chain is Alpha1-proteinase inhibitor-degradation deficient protein 37 (ADD37), found in Saccharomyces cerevisiae (strain ATCC 204508 / S288c) (Baker's yeast).